The sequence spans 1219 residues: N-acetylglucosamine-1-phosphotransferase subunits alpha/beta (1219 aa).

Residues 27–47 (LCFGGLVLMIVSAFQFGEVVV) traverse the membrane as a helical segment. Residues asparagine 88, asparagine 119, asparagine 153, asparagine 292, and asparagine 381 are each glycosylated (N-linked (GlcNAc...) asparagine). 4 disulfides stabilise this stretch: cysteine 443-cysteine 466, cysteine 457-cysteine 473, cysteine 508-cysteine 531, and cysteine 522-cysteine 538. 2 LNR repeats span residues 443-478 (CAEGCPGSWIKDGYCDKACNNSACDWDGGDCQGSSR) and 508-538 (CNQGCANSWLADKFCDQACNVLACGFDVGDC). Aspartate 454 is a binding site for Ca(2+). A glycan (N-linked (GlcNAc...) asparagine) is linked at asparagine 462. Residues aspartate 469, aspartate 472, aspartate 519, aspartate 534, and aspartate 537 each contribute to the Ca(2+) site. N-linked (GlcNAc...) asparagine glycosylation is found at asparagine 554, asparagine 610, asparagine 617, asparagine 645, asparagine 696, asparagine 726, asparagine 823, and asparagine 974. The tract at residues 640–666 (ELPKSNTSTPVRDKEEEPKPTVATPEP) is disordered. The DMAP1-binding domain occupies 696-804 (NETLLPDEVK…DDVTTKAQSR (109 aa)). In terms of domain architecture, EF-hand spans 970–1005 (VQQLNISEVFDEIDTDHSGVLSDREIRTLATRIHEL). 4 residues coordinate Ca(2+): aspartate 983, aspartate 985, serine 987, and glutamate 994. N-linked (GlcNAc...) asparagine glycans are attached at residues asparagine 1021, asparagine 1029, and asparagine 1094. A helical transmembrane segment spans residues 1180–1200 (VLVTLVVFTVMSFFAEQLVML).

It belongs to the stealth family. As to quaternary structure, hexamer of two alpha, two beta and two gamma (GNPTG) subunits; disulfide-linked. The alpha and/or the beta subunits of the enzyme constitute the catalytic subunits. In terms of processing, the alpha- and beta-subunits are generated by a proteolytic cleavage by mbtps1 protease at the Gln-893-Asp-894 bond.

The protein localises to the golgi apparatus membrane. It carries out the reaction N(4)-[alpha-D-mannosyl-(1-&gt;2)-alpha-D-mannosyl-(glycan)]-L-asparaginyl-[protein] + UDP-N-acetyl-alpha-D-glucosamine = N(4)-[6-(N-acetyl-alpha-D-glucosaminyl-1-phospho)-alpha-D-mannosyl-(1-&gt;2)-alpha-D-mannosyl-(glycan)]-L-asparaginyl-[protein] + UMP + H(+). Functionally, catalyzes the formation of mannose 6-phosphate (M6P) markers on high mannose type oligosaccharides in the Golgi apparatus. M6P residues are required to bind to the M6P receptors (MPR), which mediate the vesicular transport of lysosomal enzymes to the endosomal/prelysosomal compartment. This is N-acetylglucosamine-1-phosphotransferase subunits alpha/beta (gnptab) from Danio rerio (Zebrafish).